Here is a 174-residue protein sequence, read N- to C-terminus: ATP synthase subunit d, mitochondrial (174 aa).

An N-acetylserine modification is found at Ser2.

It belongs to the ATPase d subunit family.

It is found in the mitochondrion inner membrane. In terms of biological role, mitochondrial membrane ATP synthase (F(1)F(0) ATP synthase or Complex V) produces ATP from ADP in the presence of a proton gradient across the membrane which is generated by electron transport complexes of the respiratory chain. F-type ATPases consist of two structural domains, F(1) - containing the extramembraneous catalytic core, and F(0) - containing the membrane proton channel, linked together by a central stalk and a peripheral stalk. During catalysis, ATP synthesis in the catalytic domain of F(1) is coupled via a rotary mechanism of the central stalk subunits to proton translocation. Part of the complex F(0) domain and the peripheric stalk, which acts as a stator to hold the catalytic alpha(3)beta(3) subcomplex and subunit a/ATP6 static relative to the rotary elements. In Kluyveromyces lactis (strain ATCC 8585 / CBS 2359 / DSM 70799 / NBRC 1267 / NRRL Y-1140 / WM37) (Yeast), this protein is ATP synthase subunit d, mitochondrial (ATP7).